Consider the following 120-residue polypeptide: Large ribosomal subunit protein eL34 (120 aa).

The protein belongs to the eukaryotic ribosomal protein eL34 family.

This Pisum sativum (Garden pea) protein is Large ribosomal subunit protein eL34 (RPL34).